The primary structure comprises 775 residues: Metal transporter CNNM4 (775 aa).

At 1–178 (MAPVGGGGRP…LLFMVEEPGR (178 aa)) the chain is on the extracellular side. Residues asparagine 85 and asparagine 122 are each glycosylated (N-linked (GlcNAc...) asparagine). The 181-residue stretch at 178–358 (RFLPLWLHIL…EPYNDLVKEE (181 aa)) folds into the CNNM transmembrane domain. A helical membrane pass occupies residues 179–199 (FLPLWLHILLITVLLVLSGIF). Residues 200–240 (SGLNLGLMALDPMELRIVQNCGTEKERRYARKIEPIRRKGN) are Cytoplasmic-facing. An intramembrane region (helical) is located at residues 241–261 (YLLCSLLLGNVLVNTSLTILL). The Cytoplasmic portion of the chain corresponds to 262 to 264 (DNL). Residues 265–285 (IGSGLMAVASSTIGIVIFGEI) form a helical membrane-spanning segment. Over 286 to 293 (LPQALCSR) the chain is Extracellular. The chain crosses the membrane as a helical span at residues 294-316 (HGLAVGANTILLTKFFMLLTFPL). Topologically, residues 317 to 775 (SFPISKLLDF…LHKASHENAI (459 aa)) are cytoplasmic. CBS domains lie at 377-438 (MTQL…CTPL) and 445-511 (YNHP…ILDE). 3 positions are modified to phosphoserine: serine 660, serine 664, and serine 770.

The protein belongs to the ACDP family. Interacts with COX11. Widely expressed. Highly expressed in heart.

It is found in the cell membrane. Functionally, probable metal transporter. The interaction with the metal ion chaperone COX11 suggests that it may play a role in sensory neuron functions. May play a role in biomineralization and retinal function. In Homo sapiens (Human), this protein is Metal transporter CNNM4 (CNNM4).